The chain runs to 392 residues: Small ribosomal subunit protein bS1 (392 aa).

S1 motif domains lie at 16-90 (GDKV…LSKR), 108-173 (DEII…LSRK), 194-262 (GDVI…LSIK), and 279-348 (DDVI…LSIK).

The protein belongs to the bacterial ribosomal protein bS1 family.

Binds mRNA; thus facilitating recognition of the initiation point. It is needed to translate mRNA with a short Shine-Dalgarno (SD) purine-rich sequence. This Staphylococcus haemolyticus (strain JCSC1435) protein is Small ribosomal subunit protein bS1 (rpsA).